The following is a 461-amino-acid chain: Photosystem II CP43 reaction center protein (461 aa).

Residues methionine 1–glutamate 2 constitute a propeptide that is removed on maturation. Threonine 3 carries the post-translational modification N-acetylthreonine. Phosphothreonine is present on threonine 3. The next 5 helical transmembrane spans lie at leucine 57 to alanine 81, leucine 122 to asparagine 143, lysine 166 to threonine 188, lysine 243 to serine 263, and tryptophan 279 to alanine 300. Glutamate 355 is a binding site for [CaMn4O5] cluster. Residues arginine 435 to proline 459 traverse the membrane as a helical segment.

The protein belongs to the PsbB/PsbC family. PsbC subfamily. PSII is composed of 1 copy each of membrane proteins PsbA, PsbB, PsbC, PsbD, PsbE, PsbF, PsbH, PsbI, PsbJ, PsbK, PsbL, PsbM, PsbT, PsbX, PsbY, PsbZ, Psb30/Ycf12, at least 3 peripheral proteins of the oxygen-evolving complex and a large number of cofactors. It forms dimeric complexes. Binds multiple chlorophylls and provides some of the ligands for the Ca-4Mn-5O cluster of the oxygen-evolving complex. It may also provide a ligand for a Cl- that is required for oxygen evolution. PSII binds additional chlorophylls, carotenoids and specific lipids. is required as a cofactor.

The protein resides in the plastid. It localises to the chloroplast thylakoid membrane. In terms of biological role, one of the components of the core complex of photosystem II (PSII). It binds chlorophyll and helps catalyze the primary light-induced photochemical processes of PSII. PSII is a light-driven water:plastoquinone oxidoreductase, using light energy to abstract electrons from H(2)O, generating O(2) and a proton gradient subsequently used for ATP formation. The polypeptide is Photosystem II CP43 reaction center protein (Gossypium barbadense (Sea Island cotton)).